Consider the following 158-residue polypeptide: MRRKLRIALVAHDNRKADIVDWALNNAEMLSQHRLFGTGTTGTLVRESFMKRGIASDITCMHSGPMGGDAEIAALVVRKEIDFAVFFIDDLNPQPHEADIQMLLRQCRIHNIPIACNRYSADLMITSSLWDDAGYVPKDPIYAPFDRKAFEESLKVKE.

One can recognise an MGS-like domain in the interval 1-158 (MRRKLRIALV…AFEESLKVKE (158 aa)). Substrate is bound by residues histidine 12, lysine 16, 38–41 (TGTT), and 63–64 (SG). Aspartate 69 acts as the Proton donor/acceptor in catalysis. Histidine 96 provides a ligand contact to substrate.

The protein belongs to the methylglyoxal synthase family.

It carries out the reaction dihydroxyacetone phosphate = methylglyoxal + phosphate. Catalyzes the formation of methylglyoxal from dihydroxyacetone phosphate. This is Methylglyoxal synthase from Treponema socranskii.